Consider the following 430-residue polypeptide: Adenylosuccinate synthetase (430 aa).

GTP contacts are provided by residues Gly12–Lys18 and Gly40–Thr42. The active-site Proton acceptor is Asp13. The Mg(2+) site is built by Asp13 and Gly40. IMP is bound by residues Asp13 to Lys16, Asn38 to His41, Thr128, Arg142, Gln223, Thr238, and Arg302. Catalysis depends on His41, which acts as the Proton donor. Thr298 to Arg304 is a binding site for substrate. GTP-binding positions include Arg304, Ser330–Asp332, and Ser412–Gly414.

Belongs to the adenylosuccinate synthetase family. In terms of assembly, homodimer. Mg(2+) is required as a cofactor.

The protein resides in the cytoplasm. The enzyme catalyses IMP + L-aspartate + GTP = N(6)-(1,2-dicarboxyethyl)-AMP + GDP + phosphate + 2 H(+). It participates in purine metabolism; AMP biosynthesis via de novo pathway; AMP from IMP: step 1/2. Functionally, plays an important role in the de novo pathway of purine nucleotide biosynthesis. Catalyzes the first committed step in the biosynthesis of AMP from IMP. This Streptococcus pyogenes serotype M1 protein is Adenylosuccinate synthetase.